The primary structure comprises 256 residues: UPF0259 membrane protein YPO2199/y2042/YP_1997 (256 aa).

6 consecutive transmembrane segments (helical) span residues 20–40, 90–110, 118–138, 141–161, 192–212, and 221–241; these read IAAI…LNQT, FSAL…IAMV, ALQA…LMFI, LVIQ…AIAL, LIVP…FLIS, and IATI…LVYL.

The protein belongs to the UPF0259 family.

Its subcellular location is the cell inner membrane. In Yersinia pestis, this protein is UPF0259 membrane protein YPO2199/y2042/YP_1997.